Consider the following 695-residue polypeptide: Segment polarity protein dishevelled homolog DVL-1 (695 aa).

In terms of domain architecture, DIX spans 1–85 (MAETKIIYHM…RVVSWLVLAE (85 aa)). The disordered stretch occupies residues 89-236 (SDAGSQGTDS…RLRQTDRASS (148 aa)). The segment covering 142–151 (SHRRERARRR) has biased composition (basic residues). A compositionally biased stretch (basic and acidic residues) spans 152 to 171 (NRDEAARTNGHPRGDRRREL). Residues 177–192 (SASTVLSSELESSSFI) show a composition bias toward low complexity. S194 carries the phosphoserine modification. The span at 201–214 (SRLSSSTEQSTSSR) shows a compositional bias: low complexity. Residues 215–228 (LIRKHKCRRRKQRL) show a composition bias toward basic residues. In terms of domain architecture, PDZ spans 251-323 (TVTLNMERHH…NDDAVRVLRE (73 aa)). The region spanning 425–499 (PDSGLEIRDR…SEQCYYVFGD (75 aa)) is the DEP domain. Positions 551–580 (PAYQDPGFSYGSGSAGSQQSEGSKSSGSTR) are enriched in low complexity. A disordered region spans residues 551–641 (PAYQDPGFSY…SQASAVAPGL (91 aa)). A compositionally biased stretch (polar residues) spans 622-635 (SQLSRGSSPRSQAS).

The protein belongs to the DSH family. As to quaternary structure, interacts with BRD7 and INVS. Interacts (via PDZ domain) with the VANGL1 and VANGL2 (via C-terminus). Interacts (via PDZ domain) with NXN. Interacts with CXXC4. Interacts with ARRB1; the interaction is enhanced by phosphorylation of DVL1. Interacts with CYLD. Interacts (via PDZ domain) with RYK. Self-associates (via DIX domain) and forms higher homooligomers. Interacts (via PDZ domain) with DACT1 and FZD7, where DACT1 and FZD7 compete for the same binding site. Interacts (via DEP domain) with MUSK; the interaction is direct and mediates the formation a DVL1, MUSK and PAK1 ternary complex involved in AChR clustering. Interacts (via PDZ domain) with TMEM88. Interacts with DCDC2. Interacts with FOXK2. Interacts with PKD1 (via extracellular domain). Interacts (via PDZ domain) with CCDC88C/DAPLE; competes with CCDC88C for binding to frizzled receptor FZD7 and dissociates from CCDC88C following initiation of non-canonical Wnt signaling when CCDC88C displaces DVL1 from ligand-activated FZD7. Ubiquitinated; undergoes both 'Lys-48'-linked ubiquitination, leading to its subsequent degradation by the ubiquitin-proteasome pathway, and 'Lys-63'-linked ubiquitination. The interaction with INVS is required for ubiquitination. Deubiquitinated by CYLD, which acts on 'Lys-63'-linked ubiquitin chains.

The protein localises to the cell membrane. The protein resides in the cytoplasm. Its subcellular location is the cytosol. It localises to the cytoplasmic vesicle. Its function is as follows. Participates in Wnt signaling by binding to the cytoplasmic C-terminus of frizzled family members and transducing the Wnt signal to down-stream effectors. Plays a role both in canonical and non-canonical Wnt signaling. Plays a role in the signal transduction pathways mediated by multiple Wnt genes. Required for LEF1 activation upon WNT1 and WNT3A signaling. DVL1 and PAK1 form a ternary complex with MUSK which is important for MUSK-dependent regulation of AChR clustering during the formation of the neuromuscular junction (NMJ). This Rattus norvegicus (Rat) protein is Segment polarity protein dishevelled homolog DVL-1 (Dvl1).